Reading from the N-terminus, the 251-residue chain is Malonyl-[acyl-carrier protein] O-methyltransferase (251 aa).

Belongs to the methyltransferase superfamily.

The enzyme catalyses malonyl-[ACP] + S-adenosyl-L-methionine = malonyl-[ACP] methyl ester + S-adenosyl-L-homocysteine. It functions in the pathway cofactor biosynthesis; biotin biosynthesis. Functionally, converts the free carboxyl group of a malonyl-thioester to its methyl ester by transfer of a methyl group from S-adenosyl-L-methionine (SAM). It allows to synthesize pimeloyl-ACP via the fatty acid synthetic pathway. The chain is Malonyl-[acyl-carrier protein] O-methyltransferase from Erwinia billingiae (strain Eb661).